A 219-amino-acid polypeptide reads, in one-letter code: Transmembrane emp24 domain-containing protein 10 (219 aa).

The N-terminal stretch at 1 to 31 is a signal peptide; sequence MSGLFGPLSRPGPLPSAWLFLLLLGPSSVLG. Positions 1 to 142 are required for interaction with STX17; it reads MSGLFGPLSR…KNYEEIAKVE (142 aa). The Lumenal portion of the chain corresponds to 32–185; it reads ISFHLPVNSR…RDTNESTNTR (154 aa). The GOLD domain occupies 41 to 193; the sequence is RKCLREEIHK…TRVLYFSIFS (153 aa). The segment at 147–178 is required for TMED10 and TMED2 cis-Golgi network localization; sequence LEVELRRLEDLSESIVNDFAYMKKREEEMRDT. Residues Arg-171 and Arg-176 each carry the dimethylated arginine modification. N-linked (GlcNAc...) asparagine glycosylation occurs at Asn-179. A helical transmembrane segment spans residues 186–206; it reads VLYFSIFSMFCLIGLATWQVF. The tract at residues 204–219 is interaction with COPG1; that stretch reads QVFYLRRFFKAKKLIE. The Cytoplasmic portion of the chain corresponds to 207–219; it reads YLRRFFKAKKLIE. The tract at residues 207 to 219 is interaction with ARF1 and IL1B; that stretch reads YLRRFFKAKKLIE. The COPII vesicle coat-binding motif lies at 211-212; that stretch reads FF. The COPI vesicle coat-binding motif lies at 211–219; it reads FFKAKKLIE.

The protein belongs to the EMP24/GP25L family. As to quaternary structure, predominantly dimeric and to a lesser extent monomeric in the ER. Monomer and dimer in ERGIC and cis-Golgi network. Forms homooligomer (via GOLD domain); the assembly is promoted by direct binding with leaderless cargos and may form a protein channel that facilitates cargo entry into the ERGIC. Forms heterooligomeric complexes with other members of the p24 family such as TMED2, TMED7 and TMED9. Interacts (via GOLD domain) with TMED2 (via GOLD domain); the complex is required for export of TMED10 from the ER to the cis-Golgi network; the complex is proposed to be involved in cis-Golgi network dynamics and / or biogenesis. Associates with the COPI vesicle coat subunits (coatomer). Tetramerization of the cytoplasmic domain at the Golgi membrane in vitro; the complex is proposed to interact with COPI coatomer and induce budding of the vesicles. Interacts with COPG1; the interaction involves TMED10 homodimer. Interacts with ARF1 (GDP-bound); the interaction probably involves a TMED10 oligomer. Interacts with SEC23A, SEC24B, SEC24C and SEC24D components of the coat protein complex II/COPII, indicative of an association of TMED10 with the COPII vesicle coat. Interacts with CD59. Interacts with MPPE1/PGAP5; the complex might recruit and sort GPI-anchored proteins to the ER-exit site, or the interaction might lead to recycling of PGAP5 between the ER and the Golgi. Interacts with F2LR1/PAR2. Interacts with KDELR2/ERD2; the interaction is disrupted by KDELR2 ligand. Found in a complex composed at least of SURF4, TMED2 and TMED10. Associates with the presenilin-dependent gamma-secretase complex. Interacts with STX17; the interaction is direct. Interacts with IL-1; the interaction is direct. Interacts with RAB21 (active GTP-bound form); the interaction is indirect and regulates TMED10 abundance and localization at the Golgi.

The protein resides in the endoplasmic reticulum membrane. The protein localises to the endoplasmic reticulum-Golgi intermediate compartment membrane. Its subcellular location is the golgi apparatus membrane. It is found in the golgi apparatus. It localises to the cis-Golgi network membrane. The protein resides in the trans-Golgi network membrane. The protein localises to the cytoplasmic vesicle. Its subcellular location is the secretory vesicle membrane. It is found in the cell membrane. It localises to the melanosome. Its function is as follows. Cargo receptor involved in protein vesicular trafficking and quality control in the endoplasmic reticulum (ER) and Golgi. The p24 protein family is a group of transmembrane proteins that bind coat protein complex I/COPI and coat protein complex II/COPII involved in vesicular trafficking between the membranes. Acts at the lumenal side for incorporation of secretory cargo molecules into transport vesicles and involved in vesicle coat formation at the cytoplasmic side. Mainly functions in the early secretory pathway and cycles between the ER, ER-Golgi intermediate compartment (ERGIC) and Golgi, mediating cargo transport through COPI and COPII-coated vesicles. In COPII vesicle-mediated anterograde transport, involved in the transport of GPI-anchored proteins by acting together with TMED2 as their cargo receptor; the function specifically implies SEC24C and SEC24D of the COPII vesicle coat and lipid raft-like microdomains of the ER. Recognizes GPI anchors structural remodeled in the ER by the GPI inositol-deacylase/PGAP1 and the metallophosphoesterase MPPE1/PGAP5. In COPI vesicle-mediated retrograde transport, involved in the biogenesis of COPI vesicles and vesicle coat recruitment. Involved in trafficking of amyloid beta A4 protein and soluble APP-beta release (independent from the modulation of gamma-secretase activity). Involved in the KDELR2-mediated retrograde transport of the toxin A subunit (CTX-A-K63)together with COPI and the COOH terminus of KDELR2. On Golgi membranes, acts as a primary receptor for ARF1-GDP, a GTP-binding protein involved in COPI-vesicle formation. Increases coatomer-dependent GTPase-activating activity of ARFGAP2 which mediates the hydrolysis of ARF1-bound GTP and therefore modulates protein trafficking from the Golgi apparatus. Involved in the exocytic trafficking of G protein-coupled receptors F2LR1/PAR2 (trypsin and tryspin-like enzyme receptor), OPRM1 (opioid receptor) and P2RY4 (UTD and UDP receptor) from the Golgi to the plasma membrane, thus contributing to receptor resensitization. In addition to its cargo receptor activity, may also act as a protein channel after oligomerization, facilitating the post-translational entry of leaderless cytoplasmic cargo into the ERGIC. Involved in the translocation into ERGIC, the vesicle entry and the secretion of leaderless cargos (lacking the secretion signal sequence), including the mature form of interleukin 1/IL-1 family members, the alpha-crystallin B chain HSPB5, the carbohydrate-binding proteins galectin-1/LGALS1 and galectin-3/LGALS3, the microtubule-associated protein Tau/MAPT, and the annexin A1/ANXA1; the translocation process is dependent on cargo protein unfolding and enhanced by chaperones HSP90AB1 and HSP90B1/GRP9. Could also associates with the presenilin-dependent gamma-secretase complex in order to regulate gamma-cleavages of the amyloid beta A4 protein to yield amyloid-beta 40/Abeta40. The protein is Transmembrane emp24 domain-containing protein 10 of Mus musculus (Mouse).